A 219-amino-acid chain; its full sequence is RPA-interacting protein (219 aa).

Position 18 is a phosphoserine (Ser18). The RIP-type zinc finger occupies 137–212; that stretch reads CPVCIKYNLR…PSLLMNCLTC (76 aa). The interval 164 to 180 is mediates nuclear export; that stretch reads STDLTEQKLRACLEENV.

In terms of assembly, interacts with the RPA1 subunit of RPA complex. Sumoylated; required for localization in the nuclear PML body and transport of RPA complex in PML body. Upon UV irradiation and during S phase, it is desumoylated, releasing RPA complex that is translocated to sites of DNA damage. Sumoylation takes place at different Lys residues.

It localises to the nucleus. In terms of biological role, mediates the import of RPA complex into the nucleus, possibly via some interaction with importin beta. Sumoylation mediates the localization of RPA complex into the PML body of the nucleus, thereby participating in RPA function in DNA metabolism. In Mus musculus (Mouse), this protein is RPA-interacting protein (Rpain).